Here is a 143-residue protein sequence, read N- to C-terminus: Methylglyoxal synthase (143 aa).

The MGS-like domain occupies 1–143; the sequence is MTVKKIALVA…DYEAYRNRII (143 aa). Substrate-binding positions include His-11, Lys-15, 37–40, and 57–58; these read TGST and SG. Catalysis depends on Asp-63, which acts as the Proton donor/acceptor. His-90 contributes to the substrate binding site.

The protein belongs to the methylglyoxal synthase family.

The catalysed reaction is dihydroxyacetone phosphate = methylglyoxal + phosphate. Catalyzes the formation of methylglyoxal from dihydroxyacetone phosphate. The protein is Methylglyoxal synthase of Coxiella burnetii (strain Dugway 5J108-111).